A 248-amino-acid polypeptide reads, in one-letter code: NH(3)-dependent NAD(+) synthetase (248 aa).

An ATP-binding site is contributed by 30-37 (GLSGGIDS). Residue D36 coordinates Mg(2+). Residue R114 participates in deamido-NAD(+) binding. T134 serves as a coordination point for ATP. E139 serves as a coordination point for Mg(2+). Deamido-NAD(+)-binding residues include K147 and D154. Positions 163 and 185 each coordinate ATP. Position 232–233 (232–233 (HK)) interacts with deamido-NAD(+).

It belongs to the NAD synthetase family. In terms of assembly, homodimer.

It catalyses the reaction deamido-NAD(+) + NH4(+) + ATP = AMP + diphosphate + NAD(+) + H(+). It functions in the pathway cofactor biosynthesis; NAD(+) biosynthesis; NAD(+) from deamido-NAD(+) (ammonia route): step 1/1. Catalyzes the ATP-dependent amidation of deamido-NAD to form NAD. Uses ammonia as a nitrogen source. In Mycoplasma genitalium (strain ATCC 33530 / DSM 19775 / NCTC 10195 / G37) (Mycoplasmoides genitalium), this protein is NH(3)-dependent NAD(+) synthetase.